We begin with the raw amino-acid sequence, 307 residues long: tRNA dimethylallyltransferase (307 aa).

ATP is bound at residue 9–16; that stretch reads GPTAVGKT. A substrate-binding site is contributed by 11–16; the sequence is TAVGKT. The tract at residues 34–37 is interaction with substrate tRNA; sequence DSMQ.

The protein belongs to the IPP transferase family. As to quaternary structure, monomer. Mg(2+) serves as cofactor.

It carries out the reaction adenosine(37) in tRNA + dimethylallyl diphosphate = N(6)-dimethylallyladenosine(37) in tRNA + diphosphate. Functionally, catalyzes the transfer of a dimethylallyl group onto the adenine at position 37 in tRNAs that read codons beginning with uridine, leading to the formation of N6-(dimethylallyl)adenosine (i(6)A). The polypeptide is tRNA dimethylallyltransferase (Levilactobacillus brevis (strain ATCC 367 / BCRC 12310 / CIP 105137 / JCM 1170 / LMG 11437 / NCIMB 947 / NCTC 947) (Lactobacillus brevis)).